A 433-amino-acid chain; its full sequence is Trigger factor (433 aa).

Residues 165 to 250 (GDSAIIDFEG…LHNIQEKVKV (86 aa)) enclose the PPIase FKBP-type domain.

This sequence belongs to the FKBP-type PPIase family. Tig subfamily.

The protein localises to the cytoplasm. It carries out the reaction [protein]-peptidylproline (omega=180) = [protein]-peptidylproline (omega=0). Functionally, involved in protein export. Acts as a chaperone by maintaining the newly synthesized protein in an open conformation. Functions as a peptidyl-prolyl cis-trans isomerase. This chain is Trigger factor, found in Sulfurimonas denitrificans (strain ATCC 33889 / DSM 1251) (Thiomicrospira denitrificans (strain ATCC 33889 / DSM 1251)).